Reading from the N-terminus, the 330-residue chain is uncharacterized protein (330 aa).

Disordered regions lie at residues 136 to 160 and 172 to 314; these read VPPSVNEPKPKTSQTTKPPSNDESS and DNEK…SQFN. Residues 223–235 show a composition bias toward pro residues; sequence PKPPAPPPPPPVP. A compositionally biased stretch (low complexity) spans 236–246; the sequence is ISMTPAAISVT. 3 stretches are compositionally biased toward polar residues: residues 263-276, 284-294, and 304-314; these read AQSTLPSVSSTTDE, TRSSSQSNSTV, and PASSPTFSQFN.

This is an uncharacterized protein from Danio rerio (Zebrafish).